The sequence spans 485 residues: Glutamyl-tRNA(Gln) amidotransferase subunit A (485 aa).

Active-site charge relay system residues include K78 and S153. S177 acts as the Acyl-ester intermediate in catalysis.

Belongs to the amidase family. GatA subfamily. As to quaternary structure, heterotrimer of A, B and C subunits.

The catalysed reaction is L-glutamyl-tRNA(Gln) + L-glutamine + ATP + H2O = L-glutaminyl-tRNA(Gln) + L-glutamate + ADP + phosphate + H(+). Its function is as follows. Allows the formation of correctly charged Gln-tRNA(Gln) through the transamidation of misacylated Glu-tRNA(Gln) in organisms which lack glutaminyl-tRNA synthetase. The reaction takes place in the presence of glutamine and ATP through an activated gamma-phospho-Glu-tRNA(Gln). This is Glutamyl-tRNA(Gln) amidotransferase subunit A from Lawsonia intracellularis (strain PHE/MN1-00).